Consider the following 477-residue polypeptide: Protein translocase subunit SecY (477 aa).

10 helical membrane passes run 28–48 (FMIS…LAII), 67–89 (FFSL…AVGI), 130–150 (IITL…ATNS), 165–185 (DFVA…VFLG), 196–216 (GITL…FIAA), 234–254 (AISF…TTFI), 286–306 (SAGV…VTIA), 329–349 (GIVL…YIQI), 387–407 (FIGA…SALI), and 413–433 (LSLG…FMSA).

It belongs to the SecY/SEC61-alpha family. As to quaternary structure, component of the Sec protein translocase complex. Heterotrimer consisting of SecY, SecE and SecG subunits. The heterotrimers can form oligomers, although 1 heterotrimer is thought to be able to translocate proteins. Interacts with the ribosome. Interacts with SecDF, and other proteins may be involved. Interacts with SecA.

The protein localises to the cell membrane. The central subunit of the protein translocation channel SecYEG. Consists of two halves formed by TMs 1-5 and 6-10. These two domains form a lateral gate at the front which open onto the bilayer between TMs 2 and 7, and are clamped together by SecE at the back. The channel is closed by both a pore ring composed of hydrophobic SecY resides and a short helix (helix 2A) on the extracellular side of the membrane which forms a plug. The plug probably moves laterally to allow the channel to open. The ring and the pore may move independently. The sequence is that of Protein translocase subunit SecY from Mycoplasma pneumoniae (strain ATCC 29342 / M129 / Subtype 1) (Mycoplasmoides pneumoniae).